Here is a 215-residue protein sequence, read N- to C-terminus: Adenylate kinase (215 aa).

10–15 (GAGKGT) serves as a coordination point for ATP. The segment at 30-59 (STGDMLRAAVKAETELGLKAKSVMDSGGLV) is NMP. AMP is bound by residues T31, R36, 57–59 (GLV), 85–88 (GFPR), and Q92. Residues 122–159 (GRRVHEGSGRIYHTIFNPPKVECIDDVTGEPLLQRKDD) are LID. Residues R123 and 132–133 (IY) each bind ATP. AMP-binding residues include R156 and R167. Residue G201 participates in ATP binding.

Belongs to the adenylate kinase family. In terms of assembly, monomer.

It localises to the cytoplasm. It catalyses the reaction AMP + ATP = 2 ADP. It participates in purine metabolism; AMP biosynthesis via salvage pathway; AMP from ADP: step 1/1. Catalyzes the reversible transfer of the terminal phosphate group between ATP and AMP. Plays an important role in cellular energy homeostasis and in adenine nucleotide metabolism. The polypeptide is Adenylate kinase (Pseudomonas savastanoi pv. phaseolicola (strain 1448A / Race 6) (Pseudomonas syringae pv. phaseolicola (strain 1448A / Race 6))).